A 492-amino-acid chain; its full sequence is Cytochrome P450 2L1 (492 aa).

Residue cysteine 436 participates in heme binding.

It belongs to the cytochrome P450 family. Heme is required as a cofactor.

Its subcellular location is the endoplasmic reticulum membrane. It is found in the microsome membrane. The enzyme catalyses an organic molecule + reduced [NADPH--hemoprotein reductase] + O2 = an alcohol + oxidized [NADPH--hemoprotein reductase] + H2O + H(+). In terms of biological role, efficient in catalyzing the monooxygenation of benzphetamine, aminopyrine, benzo(a)pyrene, progesterone, and testosterone. In Panulirus argus (Caribbean spiny lobster), this protein is Cytochrome P450 2L1 (CYP2L1).